A 356-amino-acid chain; its full sequence is Protein-arginine kinase (356 aa).

The Phosphagen kinase C-terminal domain maps to 24-254 (IVLSTRIRLA…HQLIQQEKAA (231 aa)). Residues 27–31 (STRIR), His92, Arg125, 176–180 (RASVM), and 207–212 (RGIYGE) each bind ATP. Residues 337-342 (RDYRRA) carry the RDXXRA motif of the pArg binding pocket involved in allosteric regulation motif.

It belongs to the ATP:guanido phosphotransferase family.

The catalysed reaction is L-arginyl-[protein] + ATP = N(omega)-phospho-L-arginyl-[protein] + ADP + H(+). Appears to be allosterically activated by the binding of pArg-containing polypeptides to the pArg-binding pocket localized in the C-terminal domain of McsB. Functionally, catalyzes the specific phosphorylation of arginine residues in a large number of proteins. Is part of the bacterial stress response system. Protein arginine phosphorylation has a physiologically important role and is involved in the regulation of many critical cellular processes, such as protein homeostasis, motility, competence, and stringent and stress responses, by regulating gene expression and protein activity. The polypeptide is Protein-arginine kinase (Bacillus cytotoxicus (strain DSM 22905 / CIP 110041 / 391-98 / NVH 391-98)).